Consider the following 369-residue polypeptide: Trans-enoyl reductase pyiC (369 aa).

NADP(+) is bound at residue 52–55; the sequence is CDYK. Residue 137–144 coordinates substrate; that stretch reads TGIGTLGM. NADP(+) is bound by residues 195-198, Y213, and 260-261; these read SPKN and LE. Residue 280–284 participates in substrate binding; the sequence is GPLLL. 349 to 350 is an NADP(+) binding site; that stretch reads VS.

Belongs to the zinc-containing alcohol dehydrogenase family. Monomer.

Its pathway is mycotoxin biosynthesis. In terms of biological role, trans-enoyl reductase; part of the gene cluster that mediates the biosynthesis of the mycotoxin pyrichalasin H, a tyrosine-derived cytochalasan that inhibits the growth of rice seedlings, but also inhibits lymphocyte capping and actin polymerization and alters cell morphology. Pyrichalasin H is indicated as the responsible agent for the genus-specific pathogenicity of M.grisea toward crabgrass. The first step in the pathway is catalyzed by the O-methyltransferase pyiA which methylates free tyrosine to generate the precursor O-methyltyrosine. The hybrid PKS-NRPS pyiS, assisted by the enoyl reductase pyiC, are responsible for fusion of the O-methyltyrosine precursor and the polyketide backbone. The polyketide synthase module (PKS) of pyiS is responsible for the synthesis of the polyketide backbone and the downstream nonribosomal peptide synthetase (NRPS) amidates the carboxyl end of the polyketide with the O-methyltyrosine precursor. As the NRPS A-domain demonstrates substrate tolerance, pyiS can also use phenylalanine, tyrosine and even para-chlorophenylalanine as amino acid precursor, which leads to the production of novel cytochalasans, including halogenated cytochalasans. Because pyiS lacks a designated enoylreductase (ER) domain, the required activity is provided the enoyl reductase pyiC. Reduction by the hydrolyase pyiE, followed by dehydration and intra-molecular Diels-Alder cyclization by the Diels-Alderase pyiF then yield the required isoindolone-fused macrocycle. The tailoring cytochrome P450 monooxygenases piyD and piyG catalyze the hydroxylation at C-18 and C-7, respectivily, whereas the short-chain dehydrogenase/reductase pyiH reduces the carbonyl at C-21 in preparation for the transfer of an acetyl group by the acetyltransferase pyiB. These 3 reactions whose order is not clear yet, lead to the production of O-methylpyrichalasin J, a deacetylated pyrichalasin H. Finally, pyiB to converts O-methylpyrichalasin J into the final product pyrichalasin H via acetylation of C-21. This chain is Trans-enoyl reductase pyiC, found in Pyricularia grisea (Crabgrass-specific blast fungus).